The chain runs to 513 residues: Zinc finger CCCH-type with G patch domain-containing protein (513 aa).

N-acetylmethionine is present on Met1. The tract at residues 90-131 is disordered; that stretch reads EVPVAPGAELETVPSRETGPGPTERGQEEDDGEDEEGGAALS. A compositionally biased stretch (acidic residues) spans 116-126; that stretch reads QEEDDGEDEEG. The C3H1-type zinc finger occupies 176 to 202; sequence KSLKPCSFFLEGKCRFQENCRFSHGQV. The disordered stretch occupies residues 267–296; sequence LPPLRTEPAGSSDSDGSDADDPSYARVVEP. Residues Ser278 and Ser355 each carry the phosphoserine modification. The region spanning 315-361 is the G-patch domain; sequence TRGIGSRLLAKMGYEFGKGLGRHAEGRVEPVHAVVLPRGKSLDQCAE. Disordered stretches follow at residues 367–394 and 492–513; these read TRAG…PPPR and AQEA…MTEF. A compositionally biased stretch (basic and acidic residues) spans 497 to 513; the sequence is LQREQRKADTHKKMTEF.

As to quaternary structure, interacts with CHD4/Mi-2; the interaction is direct.

Its subcellular location is the nucleus. In terms of biological role, transcription repressor that specifically binds the 5'-GGAG[GA]A[GA]A-3' consensus sequence. Represses transcription by recruiting the chromatin multiprotein complex NuRD to target promoters. Negatively regulates expression of EGFR, a gene involved in cell proliferation, survival and migration. Its ability to repress genes of the EGFR pathway suggest it may act as a tumor suppressor. This is Zinc finger CCCH-type with G patch domain-containing protein (ZGPAT) from Bos taurus (Bovine).